Here is a 2462-residue protein sequence, read N- to C-terminus: Non-reducing polyketide synthase ausA (2462 aa).

An N-terminal acylcarrier protein transacylase domain (SAT) region spans residues 16-253 (VFFGPVYPEL…HTADHIPAMK (238 aa)). In terms of domain architecture, Ketosynthase family 3 (KS3) spans 385 to 801 (SAPIAVTGFA…GSNAVIVVKE (417 aa)). Catalysis depends on for beta-ketoacyl synthase activity residues Cys550, His685, and His724. A malonyl-CoA:ACP transacylase (MAT) domain region spans residues 904–1208 (LCFGGQTGDT…LPIDLQESTA (305 aa)). Catalysis depends on Ser991, which acts as the For acyl/malonyl transferase activity. Positions 1274–1403 (HDDGLLQLVE…GKVLLDPQAA (130 aa)) are N-terminal hotdog fold. The PKS/mFAS DH domain maps to 1274 to 1581 (HDDGLLQLVE…FTSVSIQSLK (308 aa)). Residues 1277–1580 (GLLQLVERDA…TFTSVSIQSL (304 aa)) form a product template (PT) domain region. His1307 acts as the Proton acceptor; for dehydratase activity in catalysis. Positions 1431–1581 (SSNGLKRATV…FTSVSIQSLK (151 aa)) are C-terminal hotdog fold. The Proton donor; for dehydratase activity role is filled by Asp1489. The Carrier domain maps to 1613-1690 (VSDDHHLRAV…GLAHRISPSS (78 aa)). Ser1650 carries the O-(pantetheine 4'-phosphoryl)serine modification. Positions 1850–2083 (QHASEHKLLR…GFNWVDWTDN (234 aa)) are methyltransferase (CMeT) domain. The interval 2112–2462 (TPARVETVRY…YEFLRQHVAV (351 aa)) is thioesterase (TE) domain. Residues Ser2235, Asp2398, and His2430 each act as for thioesterase activity in the active site.

The catalysed reaction is 3 malonyl-CoA + acetyl-CoA + 2 S-adenosyl-L-methionine = 3,5-dimethylorsellinate + 2 S-adenosyl-L-homocysteine + 3 CO2 + 4 CoA. The protein operates within secondary metabolite biosynthesis; terpenoid biosynthesis. Non-reducing polyketide synthase; part of the gene cluster that mediates the biosynthesis of calidodehydroaustin, a fungal meroterpenoid. The first step of the pathway is the synthesis of 3,5-dimethylorsellinic acid by the polyketide synthase ausA. 3,5-dimethylorsellinic acid is then prenylated by the polyprenyl transferase ausN. Further epoxidation by the FAD-dependent monooxygenase ausM and cyclization by the probable terpene cyclase ausL lead to the formation of protoaustinoid A. Protoaustinoid A is then oxidized to spiro-lactone preaustinoid A3 by the combined action of the FAD-binding monooxygenases ausB and ausC, and the dioxygenase ausE. Acid-catalyzed keto-rearrangement and ring contraction of the tetraketide portion of preaustinoid A3 by ausJ lead to the formation of preaustinoid A4. The aldo-keto reductase ausK, with the help of ausH, is involved in the next step by transforming preaustinoid A4 into isoaustinone which is in turn hydroxylated by the P450 monooxygenase ausI to form austinolide. The cytochrome P450 monooxygenase ausG modifies austinolide to austinol. Austinol is further acetylated to austin by the O-acetyltransferase ausP, which spontaneously changes to dehydroaustin. The cytochrome P450 monooxygenase ausR then converts dehydroaustin is into 7-dehydrodehydroaustin. The hydroxylation catalyzed by ausR permits the O-acetyltransferase ausQ to add an additional acetyl group to the molecule, leading to the formation of acetoxydehydroaustin. The short chain dehydrogenase ausT catalyzes the reduction of the double bond present between carbon atoms 1 and 2 to convert 7-dehydrodehydroaustin into 1,2-dihydro-7-hydroxydehydroaustin. AusQ catalyzes not only an acetylation reaction but also the addition of the PKS ausV diketide product to 1,2-dihydro-7-hydroxydehydroaustin, forming precalidodehydroaustin. Finally, the iron/alpha-ketoglutarate-dependent dioxygenase converts precalidodehydroaustin into calidodehydroaustin. The chain is Non-reducing polyketide synthase ausA from Aspergillus calidoustus.